Reading from the N-terminus, the 52-residue chain is Large ribosomal subunit protein bL33A (52 aa).

The protein belongs to the bacterial ribosomal protein bL33 family.

This is Large ribosomal subunit protein bL33A from Staphylococcus aureus (strain USA300).